A 538-amino-acid chain; its full sequence is Putative ABC1 protein At2g40090 (538 aa).

Positions 1 to 26 (MAARSLWRTRTKLLVVGTALCGGSGA) are cleaved as a signal peptide.

It belongs to the protein kinase superfamily. ADCK protein kinase family.

This chain is Putative ABC1 protein At2g40090, found in Arabidopsis thaliana (Mouse-ear cress).